A 451-amino-acid polypeptide reads, in one-letter code: 23S rRNA (uracil(1939)-C(5))-methyltransferase RlmD (451 aa).

A TRAM domain is found at 20 to 78 (QIPAGKKQRLTIERLSDDGRGIAFLEGKTWFVAGSLAGEEVEARVLNARGKVVEARTER). Residues C91, C97, C100, and C179 each coordinate [4Fe-4S] cluster. Residues Q283, F312, N317, E333, D360, and D381 each coordinate S-adenosyl-L-methionine. C407 acts as the Nucleophile in catalysis.

The protein belongs to the class I-like SAM-binding methyltransferase superfamily. RNA M5U methyltransferase family. RlmD subfamily.

It carries out the reaction uridine(1939) in 23S rRNA + S-adenosyl-L-methionine = 5-methyluridine(1939) in 23S rRNA + S-adenosyl-L-homocysteine + H(+). Its function is as follows. Catalyzes the formation of 5-methyl-uridine at position 1939 (m5U1939) in 23S rRNA. In Pseudomonas savastanoi pv. phaseolicola (strain 1448A / Race 6) (Pseudomonas syringae pv. phaseolicola (strain 1448A / Race 6)), this protein is 23S rRNA (uracil(1939)-C(5))-methyltransferase RlmD.